We begin with the raw amino-acid sequence, 320 residues long: ATP-dependent 6-phosphofructokinase (320 aa).

Gly12 contributes to the ATP binding site. ADP is bound at residue 22-26 (RAVVR). ATP contacts are provided by residues 73 to 74 (RF) and 103 to 106 (GDGS). Asp104 provides a ligand contact to Mg(2+). 126–128 (TID) is a substrate binding site. Asp128 serves as the catalytic Proton acceptor. Arg155 lines the ADP pocket. Residues Arg163 and 170–172 (MGR) contribute to the substrate site. ADP is bound by residues 186-188 (GAE) and 214-216 (KNH). Substrate contacts are provided by residues Glu223, Arg244, and 250–253 (HIQR).

It belongs to the phosphofructokinase type A (PFKA) family. ATP-dependent PFK group I subfamily. Prokaryotic clade 'B1' sub-subfamily. Homotetramer. Mg(2+) is required as a cofactor.

The protein localises to the cytoplasm. It catalyses the reaction beta-D-fructose 6-phosphate + ATP = beta-D-fructose 1,6-bisphosphate + ADP + H(+). The protein operates within carbohydrate degradation; glycolysis; D-glyceraldehyde 3-phosphate and glycerone phosphate from D-glucose: step 3/4. With respect to regulation, allosterically activated by ADP and other diphosphonucleosides, and allosterically inhibited by phosphoenolpyruvate. Functionally, catalyzes the phosphorylation of D-fructose 6-phosphate to fructose 1,6-bisphosphate by ATP, the first committing step of glycolysis. This is ATP-dependent 6-phosphofructokinase from Teredinibacter turnerae (strain ATCC 39867 / T7901).